A 147-amino-acid chain; its full sequence is Pathogenesis-related protein PR-4B (147 aa).

An N-terminal signal peptide occupies residues methionine 1–alanine 25. The Barwin domain maps to glutamine 26–aspartate 147. 3 disulfide bridges follow: cysteine 54-cysteine 86, cysteine 75-cysteine 109, and cysteine 89-cysteine 145.

It localises to the secreted. The protein resides in the cell wall. The sequence is that of Pathogenesis-related protein PR-4B from Nicotiana tabacum (Common tobacco).